A 550-amino-acid chain; its full sequence is Beta-fructofuranosidase, insoluble isoenzyme CWINV6 (550 aa).

Residues 28–31 (WLND), Gln-47, 92–93 (WS), 157–158 (RD), and Glu-214 each bind substrate. Asp-31 is a catalytic residue. Residues Asn-235 and Asn-272 are each glycosylated (N-linked (GlcNAc...) asparagine).

The protein belongs to the glycosyl hydrolase 32 family. In terms of tissue distribution, expressed in seedlings and leaves, and, to a lower extent, in flowers and seeds.

It is found in the secreted. Its subcellular location is the extracellular space. The protein localises to the apoplast. It localises to the cell wall. The catalysed reaction is Hydrolysis of terminal, non-reducing (2-&gt;1)- and (2-&gt;6)-linked beta-D-fructofuranose residues in fructans.. Its function is as follows. 6 and 1-fructan exohydrolase that can degrade both inulin and levan-type fructans, such as phlein, levan, neokestose, levanbiose, 6-kestose, 1-kestose, inulin, and 1,1-nystose. In Arabidopsis thaliana (Mouse-ear cress), this protein is Beta-fructofuranosidase, insoluble isoenzyme CWINV6 (CWINV6).